A 472-amino-acid polypeptide reads, in one-letter code: Adenosylhomocysteinase (472 aa).

Substrate-binding residues include Thr-64, Asp-138, and Glu-198. 199 to 201 (TTT) provides a ligand contact to NAD(+). Positions 228 and 232 each coordinate substrate. Residues Asn-233, 262–267 (GFGDVG), Glu-285, Asn-320, 341–343 (IGH), and Asn-386 each bind NAD(+).

This sequence belongs to the adenosylhomocysteinase family. NAD(+) serves as cofactor.

The protein localises to the cytoplasm. The catalysed reaction is S-adenosyl-L-homocysteine + H2O = L-homocysteine + adenosine. It functions in the pathway amino-acid biosynthesis; L-homocysteine biosynthesis; L-homocysteine from S-adenosyl-L-homocysteine: step 1/1. Functionally, may play a key role in the regulation of the intracellular concentration of adenosylhomocysteine. This chain is Adenosylhomocysteinase, found in Prochlorococcus marinus (strain MIT 9312).